The chain runs to 1310 residues: Clustered mitochondria protein homolog (1310 aa).

One can recognise a Clu domain in the interval 375–619 (DITRSQESYL…RVTPLDVVWQ (245 aa)). Basic and acidic residues predominate over residues 662 to 682 (KAQEDAANKEQPSETTESKEG). 2 disordered regions span residues 662-692 (KAQE…EEAL) and 931-960 (VANG…SRAV). 3 TPR repeats span residues 1033–1066 (AKLY…TERT), 1075–1108 (ILAY…WKII), and 1117–1150 (ITTM…CESL). Disordered stretches follow at residues 1245-1266 (VQPQ…ANAS) and 1281-1310 (GGDA…KSSA).

Belongs to the CLU family. In terms of assembly, may associate with the eukaryotic translation initiation factor 3 (eIF-3) complex.

The protein localises to the cytoplasm. MRNA-binding protein involved in proper cytoplasmic distribution of mitochondria. This Aspergillus fumigatus (strain CBS 144.89 / FGSC A1163 / CEA10) (Neosartorya fumigata) protein is Clustered mitochondria protein homolog.